The primary structure comprises 93 residues: uncharacterized protein (93 aa).

This is an uncharacterized protein from Rickettsia conorii (strain ATCC VR-613 / Malish 7).